A 746-amino-acid chain; its full sequence is NAD(P)H-quinone oxidoreductase subunit 5, chloroplastic (746 aa).

Transmembrane regions (helical) follow at residues Trp-9–Phe-29, Trp-40–Ile-60, Ile-89–Ile-109, Phe-125–Ile-145, Val-147–Thr-167, Gly-185–Phe-205, Val-221–Ser-241, Thr-258–Ala-278, Leu-280–Ile-300, Leu-327–Ile-347, Ala-354–Ser-374, Thr-396–Ser-416, Leu-425–Tyr-445, Ile-547–Pro-567, Phe-608–Tyr-628, and Tyr-723–Phe-743.

This sequence belongs to the complex I subunit 5 family. NDH is composed of at least 16 different subunits, 5 of which are encoded in the nucleus.

It is found in the plastid. Its subcellular location is the chloroplast thylakoid membrane. The catalysed reaction is a plastoquinone + NADH + (n+1) H(+)(in) = a plastoquinol + NAD(+) + n H(+)(out). It carries out the reaction a plastoquinone + NADPH + (n+1) H(+)(in) = a plastoquinol + NADP(+) + n H(+)(out). In terms of biological role, NDH shuttles electrons from NAD(P)H:plastoquinone, via FMN and iron-sulfur (Fe-S) centers, to quinones in the photosynthetic chain and possibly in a chloroplast respiratory chain. The immediate electron acceptor for the enzyme in this species is believed to be plastoquinone. Couples the redox reaction to proton translocation, and thus conserves the redox energy in a proton gradient. The chain is NAD(P)H-quinone oxidoreductase subunit 5, chloroplastic (ndhF) from Olimarabidopsis pumila (Dwarf rocket).